The primary structure comprises 1254 residues: MRIERRHTTTGQSPYAGIDFRLTTSEIRNPDGSVVFKLDNVEVPTEWSQVASDVLAQKYFRKAGVAARLKKVEEESVPSFLWRSVPDTEALSQLPEKERYVSELSAKQVFDRLAGCWTYWGWKGGYFTNDEDAQAFYDELRYMLAMQMVAPNSPQWFNTGLHWAYGIDGPGQGHYYVDPFTGKLTKSKSAYEHPQPHACFIQGVGDDLVNEGGIMDLWVREARLFKYGSGTGSNFSRLRGEGEKLSGGGRSSGLMSFLKIGDRAAGAIKSGGTTRRAAKMVVVDVDHPDIETYIDWKVKEEQKVAALVTGSKINQKHLKAVLKACVNCEGSGDDCFDPEKNPALRREIKLARRSLVPDNYIKRVIQFAKQGYKDIQFDVYDTDWDSEAYLTVSGQNSNNSVSLKDDFLRAVETDGDWNLNARTSKKVTKTLKARDLWEKIGYAAWASADPGLHFNTTMNDWHTCKASGDIRASNPCSEYMFLDDTACNLASANLLTFYNVATKHFDVEGYEHLCRLWTVVLEISVMMAQFPSKAIAELSYEFRTLGLGYANIGGLLMTMGLPYDSKEGRALCGALTAVMTGITYKTSAEIAAELGTFPGYKKNAAHMLRVIRNHRRAAHGQSNGYEALSVNPVPLDLVSCPQADLVSHAQAAWDAALELGEKHGYRNAQTTVIAPTGTIGLVMDCDTTGIEPDFALVKFKKLAGGGYFKIINRAVPAALRALGYRESEIAEIEAYAVGHGSLSNAPGINASTLKAKGFTDEAIAKVEKALPTAFDIKFAFNKWTFGEDFIRDQLGIGAEAIAAPGFDLLQAVGFTKREIEAANVHICGAMTVEGAPHLKAEHYPVFDCANPCGKIGKRYLSVESHIRMMAAAQPFISGAISKTINMPNDATVEDCKSAYMLSWKLALKANALYRDGSKLSQPLNSQLIADDEDEDDAVESLYEKPMAARTAQVSEKIVEKLVERIIVMREREKMPDRRKGYTQKAVVGGHKVYLRTGEYDDGRLGEIFIDMHKEGAALRSFINNFAIAVSLGLQYGVPLDEYVDAFTFTRFEPAGPVQGNDSIKYATSILDYVFRELAVSYMSRFDLAHVDPTESNFDALGKGVEEGKEPDEGHHASKLVSRGLTRSRTDNLVVMRGGSTAVAQGNDSAPSGGSKVTALASHGASARVGDVLEGAVALKQEVSHDLSPTEKLEALQWSKSGTAQTLVPSKAERRAEAKAKGYEGEMCSECGNFTLVRNGTCMKCDTCGSTTGCS.

Residues Ser-153, 198 to 199 (AC), Gly-230, 474 to 478 (NPCSE), and 675 to 679 (PTGTI) contribute to the substrate site. Cys-199 and Cys-487 are joined by a disulfide. The active-site Proton acceptor is the Asn-474. The active-site Cysteine radical intermediate is Cys-476. Glu-478 serves as the catalytic Proton acceptor.

This sequence belongs to the ribonucleoside diphosphate reductase class-2 family. The cofactor is adenosylcob(III)alamin.

The catalysed reaction is a 2'-deoxyribonucleoside 5'-diphosphate + [thioredoxin]-disulfide + H2O = a ribonucleoside 5'-diphosphate + [thioredoxin]-dithiol. Functionally, catalyzes the reduction of ribonucleotides to deoxyribonucleotides. May function to provide a pool of deoxyribonucleotide precursors for DNA repair during oxygen limitation and/or for immediate growth after restoration of oxygen. The polypeptide is Vitamin B12-dependent ribonucleotide reductase (nrdJ) (Bradyrhizobium diazoefficiens (strain JCM 10833 / BCRC 13528 / IAM 13628 / NBRC 14792 / USDA 110)).